The primary structure comprises 160 residues: MEIGVMQLCNMLIRLKGAVKQGAWHHLYLTTKLCSFIEPLWQTSPILGLEKDILLMVTKQLWKLMDLREEVTRRGCGGMSLETRENKEESITGKEVKNLITQILLLLIDVPGMRDTRFLNCPHSLLPLTSNAELLKHCLMAGKWSPKAEMIILAAERSEH.

In terms of assembly, homodimer.

It localises to the host cytoplasm. This is Protein Bel-3 (bel3) from Human spumaretrovirus (SFVcpz(hu)).